The primary structure comprises 610 residues: Elongation factor 4 (610 aa).

Residues 11 to 193 form the tr-type G domain; it reads EKIRNFSIIA…QIVEKVPAPT (183 aa). GTP is bound by residues 23–28 and 140–143; these read DHGKST and NKID.

This sequence belongs to the TRAFAC class translation factor GTPase superfamily. Classic translation factor GTPase family. LepA subfamily.

It localises to the cell membrane. The enzyme catalyses GTP + H2O = GDP + phosphate + H(+). Its function is as follows. Required for accurate and efficient protein synthesis under certain stress conditions. May act as a fidelity factor of the translation reaction, by catalyzing a one-codon backward translocation of tRNAs on improperly translocated ribosomes. Back-translocation proceeds from a post-translocation (POST) complex to a pre-translocation (PRE) complex, thus giving elongation factor G a second chance to translocate the tRNAs correctly. Binds to ribosomes in a GTP-dependent manner. In Streptococcus pyogenes serotype M49 (strain NZ131), this protein is Elongation factor 4.